Reading from the N-terminus, the 366-residue chain is Terpene cyclase atmA (366 aa).

Helical transmembrane passes span 9 to 29 (FLLL…NNGF), 84 to 104 (LTGL…VVHI), 113 to 133 (GMVI…GIVI), 162 to 182 (GLVV…SLPA), 195 to 215 (IAAW…HHLF), 233 to 253 (VYHF…SAFV), 291 to 311 (AGLF…TMVW), and 333 to 353 (ILRL…VRLI).

It belongs to the membrane-bound ascI terpene cyclase family.

Its subcellular location is the membrane. Functionally, aflatrem synthesis protein A; part of the ATM2 gene cluster that mediates the biosynthesis of aflatrem, a tremorgenic mycotoxin with acute neurotoxic effects. Synthesis of geranylgeranyl diphosphate (GGPP) by AtmG (a GGPP synthase) precedes condensation of GGPP with indole 3-glycerol phosphate, followed by epoxidation and cyclization by AtmM (a FAD-dependent monooxygenase) and AtmC (a prenyltransferase) to produce paspaline. AtmB is also essential for paspaline production, but its exact role has not been identified yet. AtmP, a cytochrome P450 monooxygenase, subsequently converts paspaline to 13-desoxypaxilline via PC-M6 by removal of the C-30 methyl group and oxidation at C-10. AtmQ, a cytochrome P450 monooxygenase, then catalyzes the oxidation of 13-desoxypaxilline, first at C-7 to produce paspalicine and then at C-13 to form paspalinine. Finally, AtmD prenylates paspalinine to form aflatrem. The role of atmA in the aflatrem biosynthesis is still unknown. This is Terpene cyclase atmA from Aspergillus flavus.